The primary structure comprises 428 residues: Histidine--tRNA ligase (428 aa).

It belongs to the class-II aminoacyl-tRNA synthetase family. In terms of assembly, homodimer.

The protein localises to the cytoplasm. It carries out the reaction tRNA(His) + L-histidine + ATP = L-histidyl-tRNA(His) + AMP + diphosphate + H(+). This Ectopseudomonas mendocina (strain ymp) (Pseudomonas mendocina) protein is Histidine--tRNA ligase.